Here is a 214-residue protein sequence, read N- to C-terminus: 3-isopropylmalate dehydratase small subunit (214 aa).

This sequence belongs to the LeuD family. LeuD type 1 subfamily. In terms of assembly, heterodimer of LeuC and LeuD.

The enzyme catalyses (2R,3S)-3-isopropylmalate = (2S)-2-isopropylmalate. Its pathway is amino-acid biosynthesis; L-leucine biosynthesis; L-leucine from 3-methyl-2-oxobutanoate: step 2/4. In terms of biological role, catalyzes the isomerization between 2-isopropylmalate and 3-isopropylmalate, via the formation of 2-isopropylmaleate. This chain is 3-isopropylmalate dehydratase small subunit, found in Pseudomonas fluorescens (strain ATCC BAA-477 / NRRL B-23932 / Pf-5).